Here is a 921-residue protein sequence, read N- to C-terminus: TRPM8 channel-associated factor 1 (921 aa).

The Peptidase M60 domain maps to 542 to 841; the sequence is YCWMSTGLYI…TYLQLQEAFG (300 aa).

Belongs to the TCAF family. As to quaternary structure, interacts with TRPM8 (via N-terminus and C-terminus domains); the interaction inhibits TRPM8 channel activity. Interacts with TRPV6. In terms of tissue distribution, isoform 2 is expressed in the prostate and strongly expressed in cancerous prostate samples.

The protein localises to the cell membrane. Positively regulates the plasma membrane cation channel TRPM8 activity. Involved in the recruitment of TRPM8 to the cell surface. Promotes prostate cancer cell migration inhibition in a TRPM8-dependent manner. This Homo sapiens (Human) protein is TRPM8 channel-associated factor 1.